Consider the following 569-residue polypeptide: Urease subunit alpha (569 aa).

The region spanning G131–L569 is the Urease domain. Ni(2+) contacts are provided by H136, H138, and K219. Position 219 is an N6-carboxylysine (K219). H221 is a binding site for substrate. Residues H248 and H274 each contribute to the Ni(2+) site. H322 functions as the Proton donor in the catalytic mechanism. D362 lines the Ni(2+) pocket.

Belongs to the metallo-dependent hydrolases superfamily. Urease alpha subunit family. As to quaternary structure, heterotrimer of UreA (gamma), UreB (beta) and UreC (alpha) subunits. Three heterotrimers associate to form the active enzyme. It depends on Ni cation as a cofactor. In terms of processing, carboxylation allows a single lysine to coordinate two nickel ions.

It localises to the cytoplasm. The catalysed reaction is urea + 2 H2O + H(+) = hydrogencarbonate + 2 NH4(+). It functions in the pathway nitrogen metabolism; urea degradation; CO(2) and NH(3) from urea (urease route): step 1/1. In Synechococcus sp. (strain WH7805), this protein is Urease subunit alpha.